Here is an 844-residue protein sequence, read N- to C-terminus: NADPH-Fe(3+) oxidoreductase subunit alpha (844 aa).

The region spanning 1–78 (MVSLTIDGKD…GIKVTTQSEK (78 aa)) is the 2Fe-2S ferredoxin-type domain. 4 residues coordinate [2Fe-2S] cluster: cysteine 34, cysteine 45, cysteine 48, and cysteine 62. The region spanning 78 to 117 (KLSRIRQKIMELMLVNHPLDCPVCDAGGECDLQNACYGLG) is the 4Fe-4S His(Cys)3-ligated-type domain. Residues histidine 94, cysteine 98, cysteine 101, cysteine 107, cysteine 146, cysteine 149, cysteine 152, cysteine 186, cysteine 189, cysteine 192, cysteine 196, cysteine 222, cysteine 225, cysteine 229, and cysteine 256 each coordinate [4Fe-4S] cluster. 2 consecutive 4Fe-4S ferredoxin-type domains span residues 137 to 168 (PLIE…IRVV) and 177 to 206 (DTVD…SKPF). The region spanning 215–270 (FTTTPSVCPFCATGCQIEYHSRNGRVERVTSDDSTYNSGNLCINGRFGYSYINSPD) is the 4Fe-4S Mo/W bis-MGD-type domain.

Heterotetramer with 2 beta subunits. Requires [4Fe-4S] cluster as cofactor.

It localises to the cell inner membrane. With respect to regulation, not regulated by FAD or FMN. Its function is as follows. The SfrAB enzymatic complex is probably involved in acetate metabolism and does not participate directly in the reduction of Fe(3+) chelates. May serve as a major route for NADP regeneration. This Geobacter sulfurreducens (strain DL-1 / KN400) protein is NADPH-Fe(3+) oxidoreductase subunit alpha (sfrA).